The chain runs to 677 residues: Methionine--tRNA ligase (677 aa).

Positions 14-24 (PYANGAIHLGH) match the 'HIGH' region motif. Zn(2+)-binding residues include cysteine 145, cysteine 148, cysteine 158, and cysteine 161. The short motif at 330–334 (KMSKS) is the 'KMSKS' region element. Residue lysine 333 participates in ATP binding. Residues 576 to 677 (DFAKVDLRVA…EGALPGMRVM (102 aa)) form the tRNA-binding domain.

It belongs to the class-I aminoacyl-tRNA synthetase family. MetG type 1 subfamily. As to quaternary structure, homodimer. Zn(2+) serves as cofactor.

The protein resides in the cytoplasm. It catalyses the reaction tRNA(Met) + L-methionine + ATP = L-methionyl-tRNA(Met) + AMP + diphosphate. Functionally, is required not only for elongation of protein synthesis but also for the initiation of all mRNA translation through initiator tRNA(fMet) aminoacylation. In Saccharophagus degradans (strain 2-40 / ATCC 43961 / DSM 17024), this protein is Methionine--tRNA ligase.